Reading from the N-terminus, the 315-residue chain is MIEIDNGGAIALKGFNYQKASIILVMIHNFEKDNFIVIPESQEDFEIHLGQDTYFIQVKGTKKLSIGKLKSRPSGKASIIEKNLSPGNVGDIRKIFLWDIAELTKNELISQEGTLIPMKHSLSLKQKTEIINTLDLDEEQKNRMNNQYIYITPFPNDINLALTFLKGEMVNENLLVSNDRAKLVLGELSLEIDRKSEIVVSTESDVERKKIDGNYLKQVFINIKQKEMFDEILDNLSINTIMKKKVKKEKLRIPLLYQNIKEQTKQKADINLLMRENDEGAINYLRDLLVEIVPDMKPTELSIALAIDCFCELGE.

Component of antiviral defense system Lamassu type I, composed of LmuA and LmuB. Expression of Lamassu type I in B.subtilis (strain BEST7003) confers resistance to phages phi3T, SpBeta and SPR. In Bacillus sp. (strain NCIM 5461 / CCTCC AB 2011126 / NIO-1130), this protein is Lamassu protein LmuA.